The sequence spans 56 residues: Small ribosomal subunit protein uS14 (56 aa).

Belongs to the universal ribosomal protein uS14 family. In terms of assembly, component of the small ribosomal subunit (SSU). Mature yeast ribosomes consist of a small (40S) and a large (60S) subunit. The 40S small subunit contains 1 molecule of ribosomal RNA (18S rRNA) and at least 33 different proteins. The large 60S subunit contains 3 rRNA molecules (25S, 5.8S and 5S rRNA) and at least 46 different proteins.

It localises to the cytoplasm. Its subcellular location is the nucleus. Functionally, component of the ribosome, a large ribonucleoprotein complex responsible for the synthesis of proteins in the cell. The small ribosomal subunit (SSU) binds messenger RNAs (mRNAs) and translates the encoded message by selecting cognate aminoacyl-transfer RNA (tRNA) molecules. The large subunit (LSU) contains the ribosomal catalytic site termed the peptidyl transferase center (PTC), which catalyzes the formation of peptide bonds, thereby polymerizing the amino acids delivered by tRNAs into a polypeptide chain. The nascent polypeptides leave the ribosome through a tunnel in the LSU and interact with protein factors that function in enzymatic processing, targeting, and the membrane insertion of nascent chains at the exit of the ribosomal tunnel. This Schizosaccharomyces pombe (strain 972 / ATCC 24843) (Fission yeast) protein is Small ribosomal subunit protein uS14 (rps29).